Here is a 268-residue protein sequence, read N- to C-terminus: Nickel import ATP-binding protein NikE (268 aa).

The region spanning 4-252 (LNVSDLSHHY…SSDAGRVLQN (249 aa)) is the ABC transporter domain. 45-52 (GRSGCGKS) is an ATP binding site.

Belongs to the ABC transporter superfamily. Nickel importer (TC 3.A.1.5.3) family. As to quaternary structure, the complex is composed of two ATP-binding proteins (NikD and NikE), two transmembrane proteins (NikB and NikC) and a solute-binding protein (NikA).

It is found in the cell inner membrane. It carries out the reaction Ni(2+)(out) + ATP + H2O = Ni(2+)(in) + ADP + phosphate + H(+). Functionally, part of the ABC transporter complex NikABCDE involved in nickel import. Responsible for energy coupling to the transport system. In Shigella dysenteriae serotype 1 (strain Sd197), this protein is Nickel import ATP-binding protein NikE.